The primary structure comprises 114 residues: Astacin-like metalloprotease toxin 4 (114 aa).

Residues 1–114 (RETNENDYVD…GLLCLFKGSV (114 aa)) form the Peptidase M12A domain. The cysteines at positions 17 and 38 are disulfide-linked. Histidine 46 is a Zn(2+) binding site. Glutamate 47 is an active-site residue. The Zn(2+) site is built by histidine 50 and histidine 56. An N-linked (GlcNAc...) asparagine glycan is attached at asparagine 88.

In terms of assembly, monomer. Zn(2+) serves as cofactor. Expressed by the venom gland.

It localises to the secreted. With respect to regulation, inhibited by 1,10-phenanthroline. Its function is as follows. Zinc metalloprotease. Provoques deadhesion of endothelial cells from cell cultures, and also degradation of fibronectin, fibrinogen and gelatin in vitro. Its role in the venom is not fully understood but it might act as a spreading factor that facilitates diffusion of other venom toxins. Alternatively, it might be involved in the proteolytic processing of other venom toxins or it might play a role in extra-oral digestion of prey. This is Astacin-like metalloprotease toxin 4 from Loxosceles laeta (South American recluse spider).